The chain runs to 364 residues: MKGLILVGGYGTRLRPLTLSLPKPLVEFGNRPMILHQIEALANAGCTDIVLAVNYKPEVMVGALKQYEKEYGVSITFSVEEEPLGTAGPLKLAEKILKKDNTPIFVLNSDVICEYPLRDLLEFHTAHGGEATIVATKVDEPSKYGVIVHDRDVPNLIERFVEKPVEFVGNRINAGIYVLNPSVIDLIEMRPTSIEHETFPILVEQKKLYSFDLPGYWMDVGQPKDFLSGMCLYLSALTKKNSNLLTSTSEEYVNGGNVLIDPSAKIGKGCKIGPNVVIGPNCIIGDGVRIQRSTILKNSQIKDHAWVKSTIVGWNSTVGKWARLEGVTVLGEDVTVKDEVYVNGGKVLPHKSIKDNVETPQIIM.

This sequence belongs to the transferase hexapeptide repeat family.

The protein localises to the cytoplasm. The catalysed reaction is alpha-D-mannose 1-phosphate + GTP + H(+) = GDP-alpha-D-mannose + diphosphate. The protein operates within nucleotide-sugar biosynthesis; GDP-alpha-D-mannose biosynthesis; GDP-alpha-D-mannose from alpha-D-mannose 1-phosphate (GTP route): step 1/1. In terms of biological role, involved in cell wall synthesis where it is required for glycosylation. Involved in cell cycle progression through cell-size checkpoint. The sequence is that of Mannose-1-phosphate guanyltransferase (MPG1) from Pichia angusta (Yeast).